The following is a 325-amino-acid chain: Ribonuclease Z (325 aa).

Zn(2+) is bound by residues His63, His65, Asp67, His68, His147, Asp218, and His276. Asp67 (proton acceptor) is an active-site residue.

This sequence belongs to the RNase Z family. In terms of assembly, homodimer. The cofactor is Zn(2+).

The catalysed reaction is Endonucleolytic cleavage of RNA, removing extra 3' nucleotides from tRNA precursor, generating 3' termini of tRNAs. A 3'-hydroxy group is left at the tRNA terminus and a 5'-phosphoryl group is left at the trailer molecule.. Functionally, zinc phosphodiesterase, which displays some tRNA 3'-processing endonuclease activity. Probably involved in tRNA maturation, by removing a 3'-trailer from precursor tRNA. The protein is Ribonuclease Z of Oenococcus oeni (strain ATCC BAA-331 / PSU-1).